The sequence spans 436 residues: Adenylosuccinate synthetase (436 aa).

GTP-binding positions include 13 to 19 (GDEGKGK) and 41 to 43 (GHT). Aspartate 14 functions as the Proton acceptor in the catalytic mechanism. The Mg(2+) site is built by aspartate 14 and glycine 41. IMP contacts are provided by residues 14–17 (DEGK), 39–42 (NAGH), threonine 131, arginine 145, glutamine 226, threonine 241, and arginine 309. The active-site Proton donor is the histidine 42. 305–311 (TVTGRKR) contributes to the substrate binding site. GTP-binding positions include arginine 311, 337 to 339 (KLD), and 419 to 421 (STG).

The protein belongs to the adenylosuccinate synthetase family. As to quaternary structure, homodimer. The cofactor is Mg(2+).

It localises to the cytoplasm. It carries out the reaction IMP + L-aspartate + GTP = N(6)-(1,2-dicarboxyethyl)-AMP + GDP + phosphate + 2 H(+). Its pathway is purine metabolism; AMP biosynthesis via de novo pathway; AMP from IMP: step 1/2. In terms of biological role, plays an important role in the de novo pathway of purine nucleotide biosynthesis. Catalyzes the first committed step in the biosynthesis of AMP from IMP. This Aromatoleum aromaticum (strain DSM 19018 / LMG 30748 / EbN1) (Azoarcus sp. (strain EbN1)) protein is Adenylosuccinate synthetase.